Consider the following 326-residue polypeptide: Meso-diaminopimelate D-dehydrogenase (326 aa).

Residues 11 to 14 (YGNL), 35 to 37 (TRR), 69 to 72 (CGGS), 92 to 94 (SFD), and 121 to 125 (VGWDP) contribute to the NADP(+) site. Residues D94, D124, W148, 154-155 (QG), T173, R199, H249, and N276 contribute to the substrate site.

It belongs to the diaminopimelate dehydrogenase family. As to quaternary structure, homodimer.

It catalyses the reaction meso-2,6-diaminopimelate + NADP(+) + H2O = (S)-2-amino-6-oxoheptanedioate + NH4(+) + NADPH + H(+). The protein operates within amino-acid biosynthesis; L-lysine biosynthesis via DAP pathway; DL-2,6-diaminopimelate from (S)-tetrahydrodipicolinate: step 1/1. L,L-2,6-diaminopimelate, D,D-2,6-diaminopimelate and meso-2,5-diaminoadipate competitively inhibit the oxidation of meso-2,6-diaminopimelate. L-2-amino-6-methylene-pimelate is also a potent competitive inhibitor (5 uM) of this reaction. Glyoxylate inhibits the reductive amination of L-2-amino-6-oxopimelate about 30%. The enzyme is inhibited completely by p-chloromercuribenzoate and HgCl(2) in vitro. In terms of biological role, catalyzes the reversible NADPH-dependent reductive amination of L-2-amino-6-oxopimelate, the acyclic form of L-tetrahydrodipicolinate, to generate the meso compound, D,L-2,6-diaminopimelate. Probably plays a role in lysine biosynthesis. Exhibits a high substrate specificity, since alpha-ketoglutarate, pyruvate, oxaloacetate, glyoxylate, alpha-ketobutyrate, alpha-ketovalerate, alpha-ketocaproate, alpha-ketoisocaproate, alpha-ketoisovalerate, and phenylpyruvate are not substrates for the reductive amination reaction, and L,L-2,6-diaminopimelate, D,D-2,6-diaminopimelate, DL-alpha-aminopimelate, meso- and DL-2,5-diaminoadipate, L-djenkolate, L-cystine, L-lysine, S-(beta-aminoethy1)-L-homocysteine, L-ornithine, L-arginine, L-alpha,gamma-diaminobutyrate, L-histidine, L-phenylalanine, L-tyrosine, L-glutamate, L-aspartate, L-leucine, L-valine, L-methionine, L-serine, L-alanine, L-alpha-aminobutyrate, D-lysine, D-glutamate, D-leucine, D-alanine, D-phenylalanine, epsilon-aminocaproate, 7-aminoheptanoate, and 8-aminooctanoate are not substrates for the oxidative deamination reaction. Cannot use NAD(+) or NAD(+) analogs instead of NADP(+) for the oxidative deamination reaction. This is Meso-diaminopimelate D-dehydrogenase (dapdh) from Lysinibacillus sphaericus (Bacillus sphaericus).